A 338-amino-acid chain; its full sequence is DNA fragmentation factor subunit beta (338 aa).

The 77-residue stretch at 4–80 (KPKSVKLRAL…LLTLGQAWQG (77 aa)) folds into the CIDE-N domain.

In terms of assembly, heterodimer of DFFA and DFFB. Interacts with H1-1.

Its subcellular location is the cytoplasm. The protein localises to the nucleus. With respect to regulation, inhibited by DFFA (DFF45). Functionally, nuclease that induces DNA fragmentation and chromatin condensation during apoptosis. Degrades naked DNA and induces apoptotic morphology. The sequence is that of DNA fragmentation factor subunit beta (DFFB) from Homo sapiens (Human).